A 93-amino-acid polypeptide reads, in one-letter code: DNA/RNA-binding protein Alba (93 aa).

Lys-11 is modified (N6-acetyllysine).

This sequence belongs to the histone-like Alba family. In terms of processing, acetylated. Acetylation at Lys-11 decreases DNA-binding affinity.

It is found in the cytoplasm. Its subcellular location is the chromosome. In terms of biological role, binds double-stranded DNA tightly but without sequence specificity. Involved in DNA compaction. The polypeptide is DNA/RNA-binding protein Alba (Pyrococcus furiosus (strain ATCC 43587 / DSM 3638 / JCM 8422 / Vc1)).